The primary structure comprises 503 residues: UDP-N-acetylmuramoylalanine--D-glutamate ligase (503 aa).

An ATP-binding site is contributed by glycine 129 to threonine 135.

Belongs to the MurCDEF family.

The protein localises to the cytoplasm. The enzyme catalyses UDP-N-acetyl-alpha-D-muramoyl-L-alanine + D-glutamate + ATP = UDP-N-acetyl-alpha-D-muramoyl-L-alanyl-D-glutamate + ADP + phosphate + H(+). The protein operates within cell wall biogenesis; peptidoglycan biosynthesis. Cell wall formation. Catalyzes the addition of glutamate to the nucleotide precursor UDP-N-acetylmuramoyl-L-alanine (UMA). The polypeptide is UDP-N-acetylmuramoylalanine--D-glutamate ligase (Burkholderia cenocepacia (strain HI2424)).